Here is a 450-residue protein sequence, read N- to C-terminus: UDP-N-acetylglucosamine--peptide N-acetylglucosaminyltransferase stabilizing protein GtfB (450 aa).

It belongs to the GtfB family. In terms of assembly, forms a heterotetramer with 2 subunits each of GtfA and GtfB. Part of the accessory SecA2/SecY2 protein translocation apparatus required to export cell wall protein GspB.

It is found in the cell membrane. Its pathway is protein modification; protein glycosylation. Required for polymorphic O-glycosylation of GspB, a serine-rich repeat cell wall protein encoded upstream in the same operon. A substrate-binding protein that is part of the accessory SecA2/SecY2 system specifically required to export GspB. The GtfA-GtfB complex adds GlcNAc from UDP-GlcNAc to GspB, attaching the first sugar residue. Upon coexpression in E.coli with GtfA glycosylates GspB constructs. Binds the GspB protein substrate; alone this subunit only recognizes partially glycosylated GspB, but is constrained by GtfA to also recognize unglycosylated protein. The enzyme probably modifies its tertiary conformation by opening and closing its intersubunit interfaces to accomodate the increasingly glycosylated substrate. This is UDP-N-acetylglucosamine--peptide N-acetylglucosaminyltransferase stabilizing protein GtfB from Streptococcus gordonii.